The sequence spans 487 residues: NAD-dependent histone deacetylase HST3 (487 aa).

In terms of domain architecture, Deacetylase sirtuin-type spans 15-336 (PADTSIKLHE…FLTQEQLDSE (322 aa)). Residues 40 to 59 (GAGI…DGLY) and 129 to 132 (QNID) each bind NAD(+). His167 (proton acceptor) is an active-site residue. Residues Cys175, Cys178, Cys200, and Cys203 each coordinate Zn(2+). NAD(+) contacts are provided by residues 261 to 263 (GTS), 291 to 293 (NKT), and Cys312. The span at 397–406 (VESVSVKEEP) shows a compositional bias: basic and acidic residues. The interval 397–487 (VESVSVKEEP…ARKGITLDQH (91 aa)) is disordered. Over residues 415 to 425 (HKPKQATKLKR) the composition is skewed to basic residues. A compositionally biased stretch (polar residues) spans 448 to 459 (DQLSSPASSING).

This sequence belongs to the sirtuin family. Class I subfamily. Requires Zn(2+) as cofactor.

It localises to the cytoplasm. The protein resides in the nucleus. The catalysed reaction is N(6)-acetyl-L-lysyl-[protein] + NAD(+) + H2O = 2''-O-acetyl-ADP-D-ribose + nicotinamide + L-lysyl-[protein]. In terms of biological role, NAD-dependent histone deacetylase, which could function in telomeric silencing, cell cycle progression and chromosome stability. This is NAD-dependent histone deacetylase HST3 (HST3) from Candida albicans (strain SC5314 / ATCC MYA-2876) (Yeast).